The primary structure comprises 172 residues: uncharacterized protein (172 aa).

This is an uncharacterized protein from Rattus norvegicus (Rat).